The primary structure comprises 1022 residues: Integrator complex subunit 4 (1022 aa).

1D-myo-inositol hexakisphosphate contacts are provided by T148 and K184. The segment at 818 to 840 (KDEEEKPPVVETDMPMKESVSRD) is disordered.

Belongs to the Integrator subunit 4 family. In terms of assembly, belongs to the multiprotein complex Integrator, at least composed of IntS1, IntS2, IntS3, IntS4, omd/IntS5, IntS6, defl/IntS7, IntS8, IntS9, IntS10, IntS11, IntS12, asun/IntS13, IntS14 and IntS15. The core complex associates with protein phosphatase 2A subunits mts/PP2A and Pp2A-29B, to form the Integrator-PP2A (INTAC) complex. IntS4 is part of the RNA endonuclease subcomplex, composed of IntS4, IntS9, IntS11 and inositol hexakisphosphate (InsP6).

The protein localises to the nucleus. Functionally, component of the integrator complex, a multiprotein complex that terminates RNA polymerase II (Pol II) transcription in the promoter-proximal region of genes. The integrator complex provides a quality checkpoint during transcription elongation by driving premature transcription termination of transcripts that are unfavorably configured for transcriptional elongation: the complex terminates transcription by (1) catalyzing dephosphorylation of the C-terminal domain (CTD) of Pol II subunit Polr2A/Rbp1 and Spt5, and (2) degrading the exiting nascent RNA transcript via endonuclease activity. The integrator complex is also involved in the 3'-end processing of the U7 snRNA, and also the spliceosomal snRNAs U1, U2, U4 and U5. The chain is Integrator complex subunit 4 from Drosophila melanogaster (Fruit fly).